We begin with the raw amino-acid sequence, 96 residues long: Protein RnfH (96 aa).

Belongs to the UPF0125 (RnfH) family.

The chain is Protein RnfH from Escherichia coli O81 (strain ED1a).